We begin with the raw amino-acid sequence, 393 residues long: Formate-dependent phosphoribosylglycinamide formyltransferase (393 aa).

Residues 22–23 (EL) and glutamate 82 contribute to the N(1)-(5-phospho-beta-D-ribosyl)glycinamide site. ATP is bound by residues arginine 114, lysine 155, 160–165 (SSGKGQ), 195–198 (EGFV), and glutamate 203. An ATP-grasp domain is found at 119–308 (RLAAEELGLP…EFALHVRAIL (190 aa)). Glutamate 267 and glutamate 279 together coordinate Mg(2+). N(1)-(5-phospho-beta-D-ribosyl)glycinamide-binding positions include aspartate 286, lysine 356, and 363 to 364 (RR).

The protein belongs to the PurK/PurT family. Homodimer.

It carries out the reaction N(1)-(5-phospho-beta-D-ribosyl)glycinamide + formate + ATP = N(2)-formyl-N(1)-(5-phospho-beta-D-ribosyl)glycinamide + ADP + phosphate + H(+). Its pathway is purine metabolism; IMP biosynthesis via de novo pathway; N(2)-formyl-N(1)-(5-phospho-D-ribosyl)glycinamide from N(1)-(5-phospho-D-ribosyl)glycinamide (formate route): step 1/1. Involved in the de novo purine biosynthesis. Catalyzes the transfer of formate to 5-phospho-ribosyl-glycinamide (GAR), producing 5-phospho-ribosyl-N-formylglycinamide (FGAR). Formate is provided by PurU via hydrolysis of 10-formyl-tetrahydrofolate. The polypeptide is Formate-dependent phosphoribosylglycinamide formyltransferase (Nitratidesulfovibrio vulgaris (strain ATCC 29579 / DSM 644 / CCUG 34227 / NCIMB 8303 / VKM B-1760 / Hildenborough) (Desulfovibrio vulgaris)).